The sequence spans 352 residues: Ribosomal RNA large subunit methyltransferase M (352 aa).

S-adenosyl-L-methionine is bound by residues Ser-184, 217–220, Asp-236, Asp-256, and Asp-272; that span reads APGG. Lys-301 acts as the Proton acceptor in catalysis.

The protein belongs to the class I-like SAM-binding methyltransferase superfamily. RNA methyltransferase RlmE family. RlmM subfamily. As to quaternary structure, monomer.

The protein resides in the cytoplasm. It carries out the reaction cytidine(2498) in 23S rRNA + S-adenosyl-L-methionine = 2'-O-methylcytidine(2498) in 23S rRNA + S-adenosyl-L-homocysteine + H(+). Catalyzes the 2'-O-methylation at nucleotide C2498 in 23S rRNA. The protein is Ribosomal RNA large subunit methyltransferase M of Pseudomonas paraeruginosa (strain DSM 24068 / PA7) (Pseudomonas aeruginosa (strain PA7)).